The sequence spans 328 residues: UPF0421 protein SSP0904 (328 aa).

The next 4 membrane-spanning stretches (helical) occupy residues 26-46, 61-81, 84-104, and 132-152; these read LFCLALNLNPIFAILTAIVTI, LPATIIGALFAVIFTFIFGDQ, FAYALSATFTIILCTKLNLHV, and LLTAIIGLVTAGLVNFIILPP.

This sequence belongs to the UPF0421 family.

It is found in the cell membrane. This is UPF0421 protein SSP0904 from Staphylococcus saprophyticus subsp. saprophyticus (strain ATCC 15305 / DSM 20229 / NCIMB 8711 / NCTC 7292 / S-41).